A 256-amino-acid polypeptide reads, in one-letter code: Pimeloyl-[acyl-carrier protein] methyl ester esterase (256 aa).

The AB hydrolase-1 domain occupies 15-242; sequence HLVLLHGWGL…AAHAPFISHP (228 aa). Residues W22, 82 to 83, and 143 to 147 contribute to the substrate site; these read SL and FLALQ. S82 (nucleophile) is an active-site residue. Catalysis depends on residues D207 and H235. A substrate-binding site is contributed by H235.

The protein belongs to the AB hydrolase superfamily. Carboxylesterase BioH family. In terms of assembly, monomer.

Its subcellular location is the cytoplasm. The enzyme catalyses 6-carboxyhexanoyl-[ACP] methyl ester + H2O = 6-carboxyhexanoyl-[ACP] + methanol + H(+). It participates in cofactor biosynthesis; biotin biosynthesis. The physiological role of BioH is to remove the methyl group introduced by BioC when the pimeloyl moiety is complete. It allows to synthesize pimeloyl-ACP via the fatty acid synthetic pathway through the hydrolysis of the ester bonds of pimeloyl-ACP esters. The polypeptide is Pimeloyl-[acyl-carrier protein] methyl ester esterase (Escherichia coli O139:H28 (strain E24377A / ETEC)).